The primary structure comprises 248 residues: Large ribosomal subunit protein uL29m (248 aa).

Disordered regions lie at residues 77–107 (VSKY…GFFG) and 223–248 (AYEP…PPSS).

The protein belongs to the universal ribosomal protein uL29 family. Component of the mitochondrial large ribosomal subunit. Mature mitochondrial ribosomes consist of a small (37S) and a large (54S) subunit. The 37S subunit contains at least 33 different proteins and 1 molecule of RNA (15S). The 54S subunit contains at least 45 different proteins and 1 molecule of RNA (21S).

The protein localises to the mitochondrion. The protein is Large ribosomal subunit protein uL29m (MRPL4) of Ajellomyces capsulatus (strain NAm1 / WU24) (Darling's disease fungus).